Here is a 356-residue protein sequence, read N- to C-terminus: Uroporphyrinogen decarboxylase (356 aa).

Substrate contacts are provided by residues 25-29 (RQAGR), Asp75, Tyr152, Thr207, and His326.

Belongs to the uroporphyrinogen decarboxylase family. As to quaternary structure, homodimer.

It localises to the cytoplasm. The catalysed reaction is uroporphyrinogen III + 4 H(+) = coproporphyrinogen III + 4 CO2. It functions in the pathway porphyrin-containing compound metabolism; protoporphyrin-IX biosynthesis; coproporphyrinogen-III from 5-aminolevulinate: step 4/4. Catalyzes the decarboxylation of four acetate groups of uroporphyrinogen-III to yield coproporphyrinogen-III. The sequence is that of Uroporphyrinogen decarboxylase from Magnetococcus marinus (strain ATCC BAA-1437 / JCM 17883 / MC-1).